The primary structure comprises 222 residues: Triosephosphate isomerase (222 aa).

Position 9-11 (9-11) interacts with substrate; that stretch reads NYK. Catalysis depends on H93, which acts as the Electrophile. Catalysis depends on E141, which acts as the Proton acceptor. Residues I146, G181, and 202 to 203 contribute to the substrate site; that span reads AS.

It belongs to the triosephosphate isomerase family. In terms of assembly, homotetramer; dimer of dimers.

It is found in the cytoplasm. The catalysed reaction is D-glyceraldehyde 3-phosphate = dihydroxyacetone phosphate. It functions in the pathway carbohydrate biosynthesis; gluconeogenesis. It participates in carbohydrate degradation; glycolysis; D-glyceraldehyde 3-phosphate from glycerone phosphate: step 1/1. In terms of biological role, involved in the gluconeogenesis. Catalyzes stereospecifically the conversion of dihydroxyacetone phosphate (DHAP) to D-glyceraldehyde-3-phosphate (G3P). This chain is Triosephosphate isomerase, found in Methanosarcina barkeri (strain Fusaro / DSM 804).